Here is a 605-residue protein sequence, read N- to C-terminus: DNA primase (605 aa).

The segment at 38–62 (CPFHDEKTPSFTVSEDKQICHCFGC) adopts a CHC2-type zinc-finger fold. The Toprim domain maps to 260–341 (DEIVLLEGFM…NVFVIQLPSG (82 aa)). 3 residues coordinate Mg(2+): E266, D310, and D312.

Belongs to the DnaG primase family. As to quaternary structure, monomer. Interacts with DnaB. It depends on Zn(2+) as a cofactor. Requires Mg(2+) as cofactor.

The catalysed reaction is ssDNA + n NTP = ssDNA/pppN(pN)n-1 hybrid + (n-1) diphosphate.. Functionally, RNA polymerase that catalyzes the synthesis of short RNA molecules used as primers for DNA polymerase during DNA replication. In Staphylococcus aureus (strain MW2), this protein is DNA primase.